The sequence spans 386 residues: Succinate--CoA ligase [ADP-forming] subunit beta (386 aa).

Positions Lys9–Asp244 constitute an ATP-grasp domain. ATP is bound by residues Lys46, Gly53 to Gly55, Glu99, Ser102, and Glu107. Residues Asn199 and Asp213 each coordinate Mg(2+). Substrate-binding positions include Asn264 and Gly321–Met323.

The protein belongs to the succinate/malate CoA ligase beta subunit family. In terms of assembly, heterotetramer of two alpha and two beta subunits. The cofactor is Mg(2+).

It carries out the reaction succinate + ATP + CoA = succinyl-CoA + ADP + phosphate. It catalyses the reaction GTP + succinate + CoA = succinyl-CoA + GDP + phosphate. It functions in the pathway carbohydrate metabolism; tricarboxylic acid cycle; succinate from succinyl-CoA (ligase route): step 1/1. Its function is as follows. Succinyl-CoA synthetase functions in the citric acid cycle (TCA), coupling the hydrolysis of succinyl-CoA to the synthesis of either ATP or GTP and thus represents the only step of substrate-level phosphorylation in the TCA. The beta subunit provides nucleotide specificity of the enzyme and binds the substrate succinate, while the binding sites for coenzyme A and phosphate are found in the alpha subunit. The chain is Succinate--CoA ligase [ADP-forming] subunit beta from Pelagibacter ubique (strain HTCC1062).